Consider the following 757-residue polypeptide: Maltose phosphorylase (757 aa).

Residue 354–355 participates in substrate binding; sequence WD. Glutamate 483 (proton donor) is an active-site residue. 588–589 lines the substrate pocket; that stretch reads KQ.

Belongs to the glycosyl hydrolase 65 family.

The catalysed reaction is D-maltose + phosphate = beta-D-glucose 1-phosphate + D-glucose. The protein operates within glycan degradation; maltose degradation. Functionally, catalyzes the phosphorolysis of maltose, leading to the formation of glucose and glucose 1-P. The sequence is that of Maltose phosphorylase (mdxK) from Bacillus subtilis (strain 168).